Consider the following 352-residue polypeptide: NAD(P)H oxidoreductase RTN4IP1, mitochondrial (352 aa).

Positions glutamate 11–isoleucine 348 constitute an Enoyl reductase (ER) domain. Valine 165, tyrosine 206, alanine 296, and phenylalanine 298 together coordinate NADPH.

It belongs to the zinc-containing alcohol dehydrogenase family. Quinone oxidoreductase subfamily.

The protein resides in the mitochondrion matrix. It catalyses the reaction a quinone + NADH + H(+) = a quinol + NAD(+). The enzyme catalyses a quinone + NADPH + H(+) = a quinol + NADP(+). The protein operates within cofactor biosynthesis; ubiquinone biosynthesis. NAD(P)H oxidoreductase involved in the ubiquinone biosynthetic pathway. Required for the O-methyltransferase activity of coq3. This is NAD(P)H oxidoreductase RTN4IP1, mitochondrial (rtn4ip1) from Dictyostelium discoideum (Social amoeba).